We begin with the raw amino-acid sequence, 267 residues long: 4-hydroxy-2-oxo-heptane-1,7-dioate aldolase (267 aa).

Residue His-45 is the Proton acceptor of the active site. Gln-147 provides a ligand contact to substrate. Residue Glu-149 participates in a divalent metal cation binding. Residues Ala-174 and Asp-175 each coordinate substrate. Position 175 (Asp-175) interacts with a divalent metal cation.

The protein belongs to the HpcH/HpaI aldolase family. As to quaternary structure, homohexamer; trimer of dimers. It depends on a divalent metal cation as a cofactor.

It carries out the reaction 4-hydroxy-2-oxoheptanedioate = succinate semialdehyde + pyruvate. The protein operates within aromatic compound metabolism; 4-hydroxyphenylacetate degradation; pyruvate and succinate semialdehyde from 4-hydroxyphenylacetate: step 7/7. In terms of biological role, catalyzes the reversible retro-aldol cleavage of 4-hydroxy-2-ketoheptane-1,7-dioate (HKHD) to pyruvate and succinic semialdehyde. The polypeptide is 4-hydroxy-2-oxo-heptane-1,7-dioate aldolase (Shigella flexneri).